Reading from the N-terminus, the 186-residue chain is Ribosome-recycling factor (186 aa).

This sequence belongs to the RRF family.

The protein resides in the cytoplasm. Functionally, responsible for the release of ribosomes from messenger RNA at the termination of protein biosynthesis. May increase the efficiency of translation by recycling ribosomes from one round of translation to another. This is Ribosome-recycling factor from Chelativorans sp. (strain BNC1).